The following is a 240-amino-acid chain: Endonuclease NBR9 (240 aa).

Residues 1-24 are disordered; that stretch reads MKGTGGVVVGTQNPVRDYNHSTDE. Residues 97-173 form the Smr domain; sequence IDLHGLYVKE…NSGVLVLELQ (77 aa). The interval 181-219 is disordered; sequence GPAVNAPTNQYNAQPHPQYNNNGGQPQGQAQNYNNSGND. Residues 194–215 are compositionally biased toward low complexity; the sequence is QPHPQYNNNGGQPQGQAQNYNN.

The protein localises to the cytoplasm. Endonuclease involved in nonstop mRNA decay via the formation of mRNA cleavage fragments in the vicinity of stalled ribosomes. The protein is Endonuclease NBR9 of Saccharomyces cerevisiae (strain ATCC 204508 / S288c) (Baker's yeast).